Consider the following 529-residue polypeptide: Beta-hexosaminidase subunit alpha (529 aa).

The signal sequence occupies residues 1-22 (MAGSTLRFSLLLAAAFAGRATA). Residues 23–88 (LWPWPQYIQT…RFPHPIEKRH (66 aa)) constitute a propeptide that is removed on maturation. A disulfide bridge links C58 with C104. Residues N115, N157, and N295 are each glycosylated (N-linked (GlcNAc...) asparagine). An intrachain disulfide couples C277 to C328. E323 serves as the catalytic Proton donor. Positions 423 to 424 (NH) are critical for hydrolysis GM2 gangliosides. An intrachain disulfide couples C505 to C522.

It belongs to the glycosyl hydrolase 20 family. There are 3 beta-hexosaminidase isozymes: isozyme A (hexosaminidase A) is a heterodimer composed of one subunit alpha and one subunit beta (chain A and B); isozyme B (hexosaminidase B) is a homodimer of two beta subunits (two chains A and B); isozyme S (hexosaminidase S) is a homodimer of two alpha subunits. The composition of the dimer (isozyme A versus isozyme S) has a significant effect on the substrate specificity of the alpha subunit active site.

It localises to the lysosome. The enzyme catalyses Hydrolysis of terminal non-reducing N-acetyl-D-hexosamine residues in N-acetyl-beta-D-hexosaminides.. The catalysed reaction is N-acetyl-beta-D-galactosaminyl-(1-&gt;4)-beta-D-3-sulfogalactosyl-(1-&gt;4)-beta-D-glucosyl-(1&lt;-&gt;1')-ceramide + H2O = a beta-D-3-sulfogalactosyl-(1-&gt;4)-beta-D-glucosyl-(1&lt;-&gt;1')-ceramide + N-acetyl-beta-D-galactosamine. It carries out the reaction a ganglioside GM2 (d18:1(4E)) + H2O = a ganglioside GM3 (d18:1(4E)) + N-acetyl-beta-D-galactosamine. It catalyses the reaction a ganglioside GM2 + H2O = a ganglioside GM3 + N-acetyl-beta-D-galactosamine. The enzyme catalyses beta-D-GalNAc-(1-&gt;4)-alpha-L-IdoA-(1-&gt;3)-beta-D-GalNAc-4-sulfate-(1-&gt;4)-alpha-L-IdoA-(1-&gt;3)-D-GalNAc-4-sulfate + H2O = alpha-L-IdoA-(1-&gt;3)-beta-D-GalNAc-4-sulfate-(1-&gt;4)-alpha-L-IdoA-(1-&gt;3)-D-GalNAc-4-sulfate + N-acetyl-D-galactosamine. The catalysed reaction is N-acetyl-beta-D-6-sulfogalactosaminyl-(1-&gt;4)-alpha-L-iduronyl-(1-&gt;3)-N-acetyl-D-6-sulfogalactosamine + H2O = alpha-L-iduronyl-(1-&gt;3)-N-acetyl-D-6-sulfogalactosamine + N-acetyl-D-6-sulfogalactosamine. Its activity is regulated as follows. Addition of GM2A stimulates the hydrolysis of sulfated glycosphingolipid SM2 and the ganglioside GM2. Hydrolyzes the non-reducing end N-acetyl-D-hexosamine and/or sulfated N-acetyl-D-hexosamine of glycoconjugates, such as the oligosaccharide moieties from proteins and neutral glycolipids, or from certain mucopolysaccharides. The isozyme S is as active as the isozyme A on the anionic bis-sulfated glycans, the chondroitin-6-sulfate trisaccharide (C6S-3), and the dermatan sulfate pentasaccharide, and the sulfated glycosphingolipid SM2. The isozyme B does not hydrolyze each of these substrates, however hydrolyzes efficiently neutral oligosaccharide. Only the isozyme A is responsible for the degradation of GM2 gangliosides in the presence of GM2A. The protein is Beta-hexosaminidase subunit alpha of Bos taurus (Bovine).